A 179-amino-acid chain; its full sequence is Signal peptidase complex catalytic subunit SEC11A (179 aa).

Residues methionine 1 to arginine 16 lie on the Cytoplasmic side of the membrane. A helical; Signal-anchor for type II membrane protein membrane pass occupies residues glutamine 17–tryptophan 36. At lysine 37–glutamate 179 the chain is on the lumenal side. Residues serine 56, histidine 96, and aspartate 122 each act as charge relay system in the active site. The C-terminal short (CTS) helix stretch occupies residues alanine 165–valine 176.

This sequence belongs to the peptidase S26B family. As to quaternary structure, component of the signal peptidase complex paralog A (SPC-A) composed of a catalytic subunit SEC11A and three accessory subunits SPCS1, SPCS2 and SPCS3. Within the complex, interacts with SPCS2 and SPCS3. The complex induces a local thinning of the ER membrane which is used to measure the length of the signal peptide (SP) h-region of protein substrates. This ensures the selectivity of the complex towards h-regions shorter than 18-20 amino acids.

The protein resides in the endoplasmic reticulum membrane. It carries out the reaction Cleavage of hydrophobic, N-terminal signal or leader sequences from secreted and periplasmic proteins.. Functionally, catalytic component of the signal peptidase complex (SPC) which catalyzes the cleavage of N-terminal signal sequences from nascent proteins as they are translocated into the lumen of the endoplasmic reticulum. Specifically cleaves N-terminal signal peptides that contain a hydrophobic alpha-helix (h-region) shorter than 18-20 amino acids. This is Signal peptidase complex catalytic subunit SEC11A (SEC11A) from Bos taurus (Bovine).